Consider the following 937-residue polypeptide: Hyphally-regulated protein (937 aa).

The first 20 residues, 1–20 (MKVVSNFIFTILLTLNLSAA), serve as a signal peptide directing secretion. N-linked (GlcNAc...) asparagine glycosylation is present at Asn16. The helical transmembrane segment at 42–62 (VHSGATWAILGTTLCSFFGGL) threads the bilayer. N-linked (GlcNAc...) asparagine glycosylation is present at Asn236. The disordered stretch occupies residues 332–483 (SAPESESDLN…QSITSSPGQS (152 aa)). Over residues 344–392 (TTSSIETSSYSSAATESSVVSESSSAVDSLTSSSLSSKSESSDVVSSTT) the composition is skewed to low complexity. A compositionally biased stretch (polar residues) spans 393–414 (NIESSSTAIETTMNSESSTDAG). Low complexity predominate over residues 415 to 475 (SSSISQSESS…SNALSSTEQS (61 aa)). Residues Asn449, Asn488, Asn580, Asn585, Asn595, and Asn603 are each glycosylated (N-linked (GlcNAc...) asparagine). Over residues 567–590 (DATTTTTTSTGGDNSTGGNESGSN) the composition is skewed to low complexity. A disordered region spans residues 567–857 (DATTTTTTST…VANPVTTSTE (291 aa)). Residues 591–609 (HGPGNGSTEGSGNGSGAGS) are compositionally biased toward gly residues. Repeat 1 spans residues 610 to 613 (NEGS). The tract at residues 610–753 (NEGSQSGPNN…GAGNGSNEGS (144 aa)) is 7 X 4 AA repeats of N-E-G-S. Asn619, Asn631, Asn641, and Asn649 each carry an N-linked (GlcNAc...) asparagine glycan. Composition is skewed to gly residues over residues 619–631 (NGSG…GSNN) and 641–665 (NGSG…GSGS). A run of 4 repeats spans residues 666-669 (NEGS), 680-683 (NEGS), 690-693 (NEGS), and 698-701 (NEGS). The span at 666 to 682 (NEGSQSGSGSQPGPNEG) shows a compositional bias: low complexity. A compositionally biased stretch (gly residues) spans 699 to 725 (EGSGSGSGSGSNNGSGSGSQSGSGSGS). An N-linked (GlcNAc...) asparagine glycan is attached at Asn711. A compositionally biased stretch (low complexity) spans 726 to 742 (QSGSESGSNSGSNEGSN). Repeat 6 spans residues 738–741 (NEGS). Gly residues predominate over residues 743 to 801 (PGAGNGSNEGSGQGSGNGSEAGSGQGSGPNNGSGSGHNDGSGSGSNQGSNPGAGSGSGS). An N-linked (GlcNAc...) asparagine glycan is attached at Asn747. Residues 750–753 (NEGS) form repeat 7. Asn759 and Asn773 each carry an N-linked (GlcNAc...) asparagine glycan. Residues 802–814 (ESGSKAGSHSGSN) show a composition bias toward low complexity. Residues 817–829 (AKTDSIEGFHTES) show a composition bias toward basic and acidic residues. Over residues 841–851 (ATVTGNSVANP) the composition is skewed to polar residues. N-linked (GlcNAc...) asparagine glycans are attached at residues Asn897 and Asn913. Asn913 is lipidated: GPI-anchor amidated asparagine. A propeptide spans 914–937 (GSSIVTGGKSILFGLIVSMVVLFM) (removed in mature form).

The protein resides in the cell membrane. The protein localises to the secreted. Its subcellular location is the cell wall. Nonessential component of the hyphal cell wall. The polypeptide is Hyphally-regulated protein (HYR1) (Candida albicans (Yeast)).